A 228-amino-acid polypeptide reads, in one-letter code: Small ribosomal subunit protein uS3 (228 aa).

In terms of domain architecture, KH type-2 spans 39–107 (VREFIRERLK…PVHINIEEIR (69 aa)).

This sequence belongs to the universal ribosomal protein uS3 family. Part of the 30S ribosomal subunit. Forms a tight complex with proteins S10 and S14.

Binds the lower part of the 30S subunit head. Binds mRNA in the 70S ribosome, positioning it for translation. The protein is Small ribosomal subunit protein uS3 of Halorhodospira halophila (strain DSM 244 / SL1) (Ectothiorhodospira halophila (strain DSM 244 / SL1)).